Here is a 154-residue protein sequence, read N- to C-terminus: Myoglobin (154 aa).

The 147-residue stretch at 2-148 (GLSDQEWQQV…FRNDMASKYK (147 aa)) folds into the Globin domain. His-65 is a nitrite binding site. His-65 provides a ligand contact to O2. Heme b is bound at residue His-94.

The protein belongs to the globin family. As to quaternary structure, monomeric.

It is found in the cytoplasm. Its subcellular location is the sarcoplasm. It carries out the reaction Fe(III)-heme b-[protein] + nitric oxide + H2O = Fe(II)-heme b-[protein] + nitrite + 2 H(+). The enzyme catalyses H2O2 + AH2 = A + 2 H2O. Monomeric heme protein which primary function is to store oxygen and facilitate its diffusion within muscle tissues. Reversibly binds oxygen through a pentacoordinated heme iron and enables its timely and efficient release as needed during periods of heightened demand. Depending on the oxidative conditions of tissues and cells, and in addition to its ability to bind oxygen, it also has a nitrite reductase activity whereby it regulates the production of bioactive nitric oxide. Under stress conditions, like hypoxia and anoxia, it also protects cells against reactive oxygen species thanks to its pseudoperoxidase activity. This Aethia pygmaea (Whiskered auklet) protein is Myoglobin (MB).